We begin with the raw amino-acid sequence, 179 residues long: ATP-dependent protease subunit HslV (179 aa).

Residue Thr-7 is part of the active site. Na(+) contacts are provided by Gly-162, Cys-165, and Thr-168.

It belongs to the peptidase T1B family. HslV subfamily. As to quaternary structure, a double ring-shaped homohexamer of HslV is capped on each side by a ring-shaped HslU homohexamer. The assembly of the HslU/HslV complex is dependent on binding of ATP.

The protein resides in the cytoplasm. The enzyme catalyses ATP-dependent cleavage of peptide bonds with broad specificity.. Allosterically activated by HslU binding. Functionally, protease subunit of a proteasome-like degradation complex believed to be a general protein degrading machinery. This is ATP-dependent protease subunit HslV from Bordetella avium (strain 197N).